The sequence spans 90 residues: Protein S100-A6 (90 aa).

EF-hand domains follow at residues 12-47 and 48-83; these read LVAIFHKYSGREGDKHTLSKKELKELIQKELTIGSK and LQDAEIARLMEDLDRNKDQEVNFQEYVTFLGALALI. Thr28 and Glu33 together coordinate Ca(2+). Lys40 carries the N6-acetyllysine modification. Phosphoserine is present on Ser46. Lys47 carries the N6-acetyllysine; alternate modification. At Lys47 the chain carries N6-succinyllysine; alternate. Positions 61, 63, 65, 67, and 72 each coordinate Ca(2+).

It belongs to the S-100 family. In terms of assembly, homodimer; head to tail assembly of 2 subunits. Interacts with CACYBP in a calcium-dependent manner. Interacts with ANXA2 and ANXA11 (via N-terminus). Interacts with SUGT1. Interacts with TP53; has higher affinity for TP53 that is phosphorylated on its N-terminal domain, and lower affinity for TP53 that is phosphorylated on its C-terminal domain. Interacts with tropomyosin. Interacts with FKBP4. Interacts with PPP5C (via TPR repeats); the interaction is calcium-dependent and modulates PPP5C activity. Interacts with TPPP; this interaction inhibits TPPP dimerization. Post-translationally, the N-terminus is blocked.

It localises to the nucleus envelope. The protein localises to the cytoplasm. The protein resides in the cell membrane. In terms of biological role, may function as calcium sensor and modulator, contributing to cellular calcium signaling. May function by interacting with other proteins, such as TPR-containing proteins, and indirectly play a role in many physiological processes such as the reorganization of the actin cytoskeleton and in cell motility. Binds 2 calcium ions. Calcium binding is cooperative. The chain is Protein S100-A6 (S100A6) from Homo sapiens (Human).